Reading from the N-terminus, the 566-residue chain is Arginine--tRNA ligase (566 aa).

Positions 120-130 match the 'HIGH' region motif; that stretch reads PNIAKPFHVGH.

The protein belongs to the class-I aminoacyl-tRNA synthetase family. As to quaternary structure, monomer.

It localises to the cytoplasm. The catalysed reaction is tRNA(Arg) + L-arginine + ATP = L-arginyl-tRNA(Arg) + AMP + diphosphate. In Clostridium kluyveri (strain NBRC 12016), this protein is Arginine--tRNA ligase.